Consider the following 323-residue polypeptide: Ubiquinone biosynthesis protein COQ4, mitochondrial (323 aa).

Residues His-209, Asp-210, His-213, and Glu-225 each contribute to the Zn(2+) site.

This sequence belongs to the COQ4 family. Component of a multi-subunit COQ enzyme complex, composed of at least COQ3, COQ4, COQ5, COQ6, COQ7 and COQ9. Zn(2+) serves as cofactor.

It is found in the mitochondrion inner membrane. The enzyme catalyses a 4-hydroxy-3-methoxy-5-(all-trans-polyprenyl)benzoate + H(+) = a 2-methoxy-6-(all-trans-polyprenyl)phenol + CO2. It participates in cofactor biosynthesis; ubiquinone biosynthesis. Its function is as follows. Lyase that catalyzes the C1-decarboxylation of 4-hydroxy-3-methoxy-5-(all-trans-polyprenyl)benzoic acid into 2-methoxy-6-(all-trans-polyprenyl)phenol during ubiquinone biosynthesis. This Debaryomyces hansenii (strain ATCC 36239 / CBS 767 / BCRC 21394 / JCM 1990 / NBRC 0083 / IGC 2968) (Yeast) protein is Ubiquinone biosynthesis protein COQ4, mitochondrial.